The chain runs to 431 residues: Phosphoribosylamine--glycine ligase (431 aa).

In terms of domain architecture, ATP-grasp spans 108–315; that stretch reads KDFLARHKIP…LVLLIEAALA (208 aa). 134 to 195 provides a ligand contact to ATP; sequence LREKGAPIVI…EEFLDGEEAS (62 aa). Positions 285 and 287 each coordinate Mg(2+).

It belongs to the GARS family. Mg(2+) serves as cofactor. Requires Mn(2+) as cofactor.

It carries out the reaction 5-phospho-beta-D-ribosylamine + glycine + ATP = N(1)-(5-phospho-beta-D-ribosyl)glycinamide + ADP + phosphate + H(+). It functions in the pathway purine metabolism; IMP biosynthesis via de novo pathway; N(1)-(5-phospho-D-ribosyl)glycinamide from 5-phospho-alpha-D-ribose 1-diphosphate: step 2/2. In Pseudomonas syringae pv. tomato (strain ATCC BAA-871 / DC3000), this protein is Phosphoribosylamine--glycine ligase.